A 510-amino-acid chain; its full sequence is ATAKAAPTEVSSILESKIRGVSDEANLDETGRVLSVGDGIARVFGLNNCQAEELVEFASGVKGMALNLEPGQVGIVLFGSDREVKEGEIVKRTGKIVDVPIGPGMLGRVVDALGNPIDGKGPIEATGYAIAQLKAPGILPRRSVFEPMQTGLKAVDALVPIGRGQRELIIGDRQTGKTAVALDTILNQKRWNDGNDESKKLYCVYVAVGQKRSTVAQLVQTLEQNDAMKYSIVVAATASEAAPLQYLAPFTACAIAEWFRDNGKHALIVYDDLSKQAVAYRQLSLLLRRPPGREAYPGDVFYLHSRLLERAAKMSDANGGGSLTALPVIETQGGDVSAYIPTNVISITDGQIFLEAELFYKGIRPAINVGLSVSRVGSAAQVKAMKQVAGSLKLFLAQYREVAAFAQFGSDLDASTKQTLSRGERLTQLLKQKQYSPQASEEQVPVIYAGVNGFLDNIPIERIPEFEEQFIAYLKANEGDILEAIRTKGELSSELLDKLKSATETFVATF.

171–178 (GDRQTGKT) contributes to the ATP binding site.

F-type ATP synthases have 2 components, the catalytic core F(1) and the membrane-embedded component F(0), linked together by a central stalk and a peripheral stalk. The central stalk, also called rotor shaft, is often seen as part of F(1). The peripheral stalk is seen as part of F(0). F(0) contains the membrane channel next to the rotor. F-type ATP synthases form dimers but each monomer functions independently in ATP generation. The dimer consists of 18 different polypeptides: ATP1 (subunit alpha, part of F(1), 3 molecules per monomer), ATP2 (subunit beta, part of F(1), 3 molecules per monomer), ATP3 (subunit gamma, part of the central stalk), ATP4 (subunit b, part of the peripheral stalk), ATP5/OSCP (subunit 5/OSCP, part of the peripheral stalk), ATP6 (subunit a, part of the peripheral stalk), ATP7 (subunit d, part of the peripheral stalk), ATP8 (subunit 8, part of the peripheral stalk), OLI1 (subunit c, part of the rotor, 10 molecules per monomer), ATP14 (subunit h, part of the peripheral stalk), ATP15 (subunit epsilon, part of the central stalk), ATP16 (subunit delta, part of the central stalk), ATP17 (subunit f, part of the peripheral stalk), ATP18 (subunit i/j, part of the peripheral stalk). Dimer-specific subunits are ATP19 (subunit k, at interface between monomers), ATP20 (subunit g, at interface between monomers), TIM11 (subunit e, at interface between monomers). Also contains subunit L.

The protein resides in the mitochondrion inner membrane. In terms of biological role, mitochondrial membrane ATP synthase (F(1)F(0) ATP synthase or Complex V) produces ATP from ADP in the presence of a proton gradient across the membrane which is generated by electron transport complexes of the respiratory chain. F-type ATP synthases consist of two structural domains, F(1) - containing the extramembraneous catalytic core, and F(0) - containing the membrane proton channel, linked together by a central stalk and a peripheral stalk. During catalysis, ATP synthesis in the catalytic domain of F(1) is coupled via a rotary mechanism of the central stalk subunits to proton translocation. Subunits alpha/ATP1 and beta/ATP2 form the catalytic core in F(1). Rotation of the central stalk against the surrounding alpha/ATP1(3)beta/ATP2(3) subunits leads to hydrolysis of ATP in three separate catalytic sites on the beta/ATP2 subunits. Subunit alpha/ATP1 does not bear the catalytic high-affinity ATP-binding sites. This is ATP synthase subunit alpha, mitochondrial from Pichia angusta (Yeast).